We begin with the raw amino-acid sequence, 1073 residues long: Semaphorin-6D (1073 aa).

The N-terminal stretch at 1-20 is a signal peptide; the sequence is MGFLLLWFCVLFLLVSRLRA. The Extracellular segment spans residues 21–662; it reads VSFPEDDEPL…GESNQMVHMN (642 aa). The Sema domain maps to 27–512; it reads DEPLNTVDYH…FSSCVVRIPL (486 aa). N51 carries N-linked (GlcNAc...) asparagine glycosylation. Disulfide bonds link C108–C118, C136–C145, C259–C370, and C284–C329. Residue N283 is glycosylated (N-linked (GlcNAc...) asparagine). N435 and N461 each carry an N-linked (GlcNAc...) asparagine glycan. 4 disulfides stabilise this stretch: C477/C506, C515/C533, C521/C568, and C525/C541. The PSI domain maps to 514–569; it reads RCERYGSCKKSCIASRDPYCGWLSQGVCERVTLGMLPGGYEQDTEYGNTAHLGDCH. N631 carries N-linked (GlcNAc...) asparagine glycosylation. A helical membrane pass occupies residues 663–683; sequence VLITCVFAAFVLGAFIAGVAV. At 684-1073 the chain is on the cytoplasmic side; it reads YCYRDMFVRK…SVRPLNKYTY (390 aa). 3 positions are modified to phosphoserine: S723, S734, and S744. Disordered regions lie at residues 745-825, 839-876, 919-986, and 1021-1073; these read RKEL…GHIP, TSFS…VDSR, PPKV…SPNG, and LQPS…KYTY. Position 773 is a phosphothreonine (T773). The span at 790 to 806 shows a compositional bias: basic and acidic residues; the sequence is SHSEKAHSHGASRKEHP. A phosphoserine mark is found at S931, S957, and S983. A compositionally biased stretch (polar residues) spans 931–942; it reads SPPSTLPRNSPT. 2 stretches are compositionally biased toward polar residues: residues 1021–1037 and 1059–1073; these read LQPS…NGTL and VPQT…KYTY.

Belongs to the semaphorin family. Expressed in brain and lung.

The protein resides in the cell membrane. Its function is as follows. Shows growth cone collapsing activity on dorsal root ganglion (DRG) neurons in vitro. May be a stop signal for the DRG neurons in their target areas, and possibly also for other neurons. May also be involved in the maintenance and remodeling of neuronal connections. Ligand of TREM2 with PLXNA1 as coreceptor in dendritic cells, plays a role in the generation of immune responses and skeletal homeostasis. The sequence is that of Semaphorin-6D (Sema6d) from Mus musculus (Mouse).